We begin with the raw amino-acid sequence, 73 residues long: Translation initiation factor IF-1 (73 aa).

The region spanning 1 to 72 is the S1-like domain; the sequence is MAKEDHIEMA…SKGRIIFRDK (72 aa).

It belongs to the IF-1 family. In terms of assembly, component of the 30S ribosomal translation pre-initiation complex which assembles on the 30S ribosome in the order IF-2 and IF-3, IF-1 and N-formylmethionyl-tRNA(fMet); mRNA recruitment can occur at any time during PIC assembly.

It localises to the cytoplasm. In terms of biological role, one of the essential components for the initiation of protein synthesis. Stabilizes the binding of IF-2 and IF-3 on the 30S subunit to which N-formylmethionyl-tRNA(fMet) subsequently binds. Helps modulate mRNA selection, yielding the 30S pre-initiation complex (PIC). Upon addition of the 50S ribosomal subunit IF-1, IF-2 and IF-3 are released leaving the mature 70S translation initiation complex. In Legionella pneumophila (strain Paris), this protein is Translation initiation factor IF-1.